A 504-amino-acid chain; its full sequence is Dimethylsulfoniopropionate lyase 5 (504 aa).

The protein belongs to the aspartate/glutamate racemases family. ALMA1 subfamily. In terms of assembly, homotetramer.

The enzyme catalyses S,S-dimethyl-beta-propiothetin = acrylate + dimethyl sulfide + H(+). Mediates cleavage of dimethylsulfoniopropionate (DMSP) into dimethyl sulfide (DMS) and acrylate. DMS is the principal form by which sulfur is transported from oceans to the atmosphere and is a key component of the ocean sulfur cycle. The chain is Dimethylsulfoniopropionate lyase 5 from Emiliania huxleyi (strain CCMP1516).